The chain runs to 263 residues: MKVVILNDAAAVARYGADLFIRQIHKKPDSVLGLATGSTPVALYKELILAYREGRVTFKQVSSFNLDEYLGLDAAHPQSYRYFMNEQLFNHIDIDKAHTLVPPGDAADPIAACALYEKAIAQRGGIDVQLLGIGRNGHIGFNEPSSSLMSRTRVKTLTRATIDDNARFFAPDEYQPHLSITMGIGTILESKKVVLLATGENKADAIKATVEGPLTAACPASALQLHEQAVLIIDEAAASKLSDVEFYKHIERENQKLLDRLGY.

Asp-67 acts as the Proton acceptor; for enolization step in catalysis. The For ring-opening step role is filled by Asn-136. The active-site Proton acceptor; for ring-opening step is the His-138. The For ring-opening step role is filled by Glu-143.

This sequence belongs to the glucosamine/galactosamine-6-phosphate isomerase family. NagB subfamily. Homohexamer.

It carries out the reaction alpha-D-glucosamine 6-phosphate + H2O = beta-D-fructose 6-phosphate + NH4(+). Its pathway is amino-sugar metabolism; N-acetylneuraminate degradation; D-fructose 6-phosphate from N-acetylneuraminate: step 5/5. Catalyzes the reversible isomerization-deamination of glucosamine 6-phosphate (GlcN6P) to form fructose 6-phosphate (Fru6P) and ammonium ion. This is Glucosamine-6-phosphate deaminase from Cellvibrio japonicus (strain Ueda107) (Pseudomonas fluorescens subsp. cellulosa).